Here is a 224-residue protein sequence, read N- to C-terminus: Glutathione peroxidase 3 (224 aa).

Residues 1–18 form the signal peptide; the sequence is MAPGSVLSLAVALATIIG. The N-linked (GlcNAc...) asparagine glycan is linked to N38. Residue C73 is part of the active site.

The protein belongs to the glutathione peroxidase family.

The protein resides in the secreted. It localises to the extracellular space. It catalyses the reaction 2 glutathione + H2O2 = glutathione disulfide + 2 H2O. This chain is Glutathione peroxidase 3 (gpx-3), found in Caenorhabditis elegans.